The sequence spans 113 residues: MSDINLPLSFSDAAATRVKMLIAEEENPALKLRVYITGGGCSGFQYGFTFDESVNEGDTTIENSGVTLVVDPMSLQYLIGGVVDYTEGLEGSRFFVNNPNATTTCGCGASFSV.

Residues Cys-41, Cys-105, and Cys-107 each contribute to the iron-sulfur cluster site.

The protein belongs to the HesB/IscA family. In terms of assembly, homodimer. Iron-sulfur cluster serves as cofactor.

Its function is as follows. Required for insertion of 4Fe-4S clusters for at least IspG. The chain is Iron-sulfur cluster insertion protein ErpA from Vibrio vulnificus (strain YJ016).